The sequence spans 218 residues: Large ribosomal subunit protein uL3 (218 aa).

Residues 127 to 167 (GFSRGPMSHGSKNHREPGSTGAGTTPGRIYPGKRMAGRYGG) form a disordered region.

It belongs to the universal ribosomal protein uL3 family. In terms of assembly, part of the 50S ribosomal subunit. Forms a cluster with proteins L14 and L19.

One of the primary rRNA binding proteins, it binds directly near the 3'-end of the 23S rRNA, where it nucleates assembly of the 50S subunit. The chain is Large ribosomal subunit protein uL3 from Prochlorococcus marinus (strain MIT 9303).